We begin with the raw amino-acid sequence, 155 residues long: Secreted RxLR effector protein 38 (155 aa).

The first 17 residues, 1–17, serve as a signal peptide directing secretion; it reads MHLIYIVMAATATTLHA. The short motif at 49–64 is the RxLR-dEER element; the sequence is RFLRGAYEDVHREEER.

This sequence belongs to the RxLR effector family.

Its subcellular location is the secreted. The protein resides in the host nucleus. It is found in the host cytoplasm. Secreted effector that completely suppresses the host cell death induced by cell death-inducing proteins. The protein is Secreted RxLR effector protein 38 of Plasmopara viticola (Downy mildew of grapevine).